Consider the following 56-residue polypeptide: Large ribosomal subunit protein bL32 (56 aa).

Residues 1-34 (MAVQQNKKSRSKRGMRRSHDSLSTAQLSVDATSG) are disordered. Residues 7 to 16 (KKSRSKRGMR) show a composition bias toward basic residues. Positions 21–31 (SLSTAQLSVDA) are enriched in polar residues.

This sequence belongs to the bacterial ribosomal protein bL32 family.

The sequence is that of Large ribosomal subunit protein bL32 from Shewanella frigidimarina (strain NCIMB 400).